A 180-amino-acid chain; its full sequence is ATP-dependent protease subunit HslV (180 aa).

Thr-8 is a catalytic residue. Na(+)-binding residues include Gly-165, Asp-168, and Thr-171.

Belongs to the peptidase T1B family. HslV subfamily. A double ring-shaped homohexamer of HslV is capped on each side by a ring-shaped HslU homohexamer. The assembly of the HslU/HslV complex is dependent on binding of ATP.

It localises to the cytoplasm. It catalyses the reaction ATP-dependent cleavage of peptide bonds with broad specificity.. With respect to regulation, allosterically activated by HslU binding. Functionally, protease subunit of a proteasome-like degradation complex believed to be a general protein degrading machinery. This is ATP-dependent protease subunit HslV from Lactiplantibacillus plantarum (strain ATCC BAA-793 / NCIMB 8826 / WCFS1) (Lactobacillus plantarum).